The chain runs to 288 residues: Ribosomal RNA small subunit methyltransferase A (288 aa).

Polar residues predominate over residues 1–14 (MSKNQGGNKHQGGS). The tract at residues 1–21 (MSKNQGGNKHQGGSKTHLGHR) is disordered. S-adenosyl-L-methionine is bound by residues N29, L31, G56, E77, D102, and N122.

Belongs to the class I-like SAM-binding methyltransferase superfamily. rRNA adenine N(6)-methyltransferase family. RsmA subfamily.

The protein resides in the cytoplasm. The catalysed reaction is adenosine(1518)/adenosine(1519) in 16S rRNA + 4 S-adenosyl-L-methionine = N(6)-dimethyladenosine(1518)/N(6)-dimethyladenosine(1519) in 16S rRNA + 4 S-adenosyl-L-homocysteine + 4 H(+). Specifically dimethylates two adjacent adenosines (A1518 and A1519) in the loop of a conserved hairpin near the 3'-end of 16S rRNA in the 30S particle. May play a critical role in biogenesis of 30S subunits. This chain is Ribosomal RNA small subunit methyltransferase A, found in Idiomarina loihiensis (strain ATCC BAA-735 / DSM 15497 / L2-TR).